Here is a 375-residue protein sequence, read N- to C-terminus: MQCVQYTAGHCHSCQWLDKSYSHQLSDKQKHLKQLLQETSVTHWLSPVMSKTSGFRNKAKMVVNGSVERPLLGMLHRDGRTVDLCDCPLYPQHFQAVFEVIKVFIAKAGLVPYNVERRKGELKYILLTESRANNEMMLRFVLRSETKLAQLERVLPWLQEQLPQLTVISANIQPTHMAILEGEKEIIFTGQTMLKETFNGIPLYIRPRSFFQTNPDIASELYATAGRWVRELNISSMWDLFCGAGGFGLHCADKETKLTGIEISAEAIDCAKSSAKSLGLKSVEFQALDSTHFALEKAKIPELVLVNPPRRGIGKELCEYLSRMAPKFVLYSSCNAETMAKDIAMLKQYRIEKVQLFDMFPHTEHYETLALLILD.

[4Fe-4S] cluster contacts are provided by Cys3, Cys11, Cys14, and Cys87. Residues Gln212, Phe241, Glu262, and Asn307 each coordinate S-adenosyl-L-methionine. The Nucleophile role is filled by Cys334.

Belongs to the class I-like SAM-binding methyltransferase superfamily. RNA M5U methyltransferase family. RlmC subfamily.

The catalysed reaction is uridine(747) in 23S rRNA + S-adenosyl-L-methionine = 5-methyluridine(747) in 23S rRNA + S-adenosyl-L-homocysteine + H(+). Catalyzes the formation of 5-methyl-uridine at position 747 (m5U747) in 23S rRNA. This is 23S rRNA (uracil(747)-C(5))-methyltransferase RlmC from Xenorhabdus nematophila (strain ATCC 19061 / DSM 3370 / CCUG 14189 / LMG 1036 / NCIMB 9965 / AN6).